Reading from the N-terminus, the 239-residue chain is Serine protease SplF (239 aa).

The signal sequence occupies residues 1 to 36 (MNKNIIIKSIAALTILTSVTGVGTTMVEGIQQTAKA). Active-site charge relay system residues include His-75, Asp-114, and Ser-192.

It belongs to the peptidase S1B family.

It localises to the secreted. The chain is Serine protease SplF (splF) from Staphylococcus aureus (strain Mu50 / ATCC 700699).